The following is a 269-amino-acid chain: Undecaprenyl-diphosphatase (269 aa).

The next 8 membrane-spanning stretches (helical) occupy residues 1–21 (MSIF…FLPI), 39–59 (LPIL…CTVF), 86–106 (LMMI…GLLL), 112–132 (TIDI…LIAS), 144–164 (VTLL…IPGI), 184–204 (AGEF…ILEI), 210–230 (LLAG…FVVG), and 249–269 (FAFY…GFAG).

It belongs to the UppP family.

The protein resides in the cell inner membrane. It carries out the reaction di-trans,octa-cis-undecaprenyl diphosphate + H2O = di-trans,octa-cis-undecaprenyl phosphate + phosphate + H(+). Functionally, catalyzes the dephosphorylation of undecaprenyl diphosphate (UPP). Confers resistance to bacitracin. The protein is Undecaprenyl-diphosphatase of Treponema denticola (strain ATCC 35405 / DSM 14222 / CIP 103919 / JCM 8153 / KCTC 15104).